The chain runs to 116 residues: Holo-[acyl-carrier-protein] synthase (116 aa).

Mg(2+) contacts are provided by Asp-8 and Glu-50.

It belongs to the P-Pant transferase superfamily. AcpS family. It depends on Mg(2+) as a cofactor.

It localises to the cytoplasm. It carries out the reaction apo-[ACP] + CoA = holo-[ACP] + adenosine 3',5'-bisphosphate + H(+). Its function is as follows. Transfers the 4'-phosphopantetheine moiety from coenzyme A to a Ser of acyl-carrier-protein. This chain is Holo-[acyl-carrier-protein] synthase, found in Beutenbergia cavernae (strain ATCC BAA-8 / DSM 12333 / CCUG 43141 / JCM 11478 / NBRC 16432 / NCIMB 13614 / HKI 0122).